Here is a 173-residue protein sequence, read N- to C-terminus: Dual-action ribosomal maturation protein DarP (173 aa).

It belongs to the DarP family.

The protein localises to the cytoplasm. In terms of biological role, member of a network of 50S ribosomal subunit biogenesis factors which assembles along the 30S-50S interface, preventing incorrect 23S rRNA structures from forming. Promotes peptidyl transferase center (PTC) maturation. This is Dual-action ribosomal maturation protein DarP from Pseudomonas putida (strain ATCC 700007 / DSM 6899 / JCM 31910 / BCRC 17059 / LMG 24140 / F1).